Reading from the N-terminus, the 527-residue chain is Probable protein kinase UbiB (527 aa).

Residues 23–43 traverse the membrane as a helical segment; that stretch reads ELLLELPLPFWLRALSWLLPW. In terms of domain architecture, Protein kinase spans 125–488; sequence RFDSQPLASA…ESDARDQWPL (364 aa). ATP-binding positions include 131-139 and Lys-153; that span reads LASASVAQV. Residue Asp-288 is the Proton acceptor of the active site. The chain crosses the membrane as a helical span at residues 504–524; sequence LAPLLATWPAWLMVGGGLYLV.

Belongs to the ABC1 family. UbiB subfamily.

Its subcellular location is the cell inner membrane. The protein operates within cofactor biosynthesis; ubiquinone biosynthesis [regulation]. Functionally, is probably a protein kinase regulator of UbiI activity which is involved in aerobic coenzyme Q (ubiquinone) biosynthesis. The sequence is that of Probable protein kinase UbiB from Ectopseudomonas mendocina (strain ymp) (Pseudomonas mendocina).